The sequence spans 304 residues: HTH-type transcriptional activator CmpR (304 aa).

Residues 1 to 61 (MKNATLHQFE…EQIGRKIYLT (61 aa)) enclose the HTH lysR-type domain. Positions 21–40 (FTKAAEELFLTQPTVSQQMK) form a DNA-binding region, H-T-H motif.

It belongs to the LysR transcriptional regulatory family.

The protein resides in the cytoplasm. In terms of biological role, activates transcription of the cmpABCD operon under carbon dioxide-limited conditions. Specifically binds to the cmpR-cmpA intergenic region. This chain is HTH-type transcriptional activator CmpR (cmpR), found in Synechocystis sp. (strain ATCC 27184 / PCC 6803 / Kazusa).